The primary structure comprises 143 residues: Nucleoside diphosphate kinase (143 aa).

Residues lysine 11, phenylalanine 59, arginine 87, threonine 93, arginine 104, and asparagine 114 each contribute to the ATP site. The Pros-phosphohistidine intermediate role is filled by histidine 117.

Belongs to the NDK family. In terms of assembly, homotetramer. Mg(2+) serves as cofactor.

Its subcellular location is the cytoplasm. It carries out the reaction a 2'-deoxyribonucleoside 5'-diphosphate + ATP = a 2'-deoxyribonucleoside 5'-triphosphate + ADP. The catalysed reaction is a ribonucleoside 5'-diphosphate + ATP = a ribonucleoside 5'-triphosphate + ADP. Major role in the synthesis of nucleoside triphosphates other than ATP. The ATP gamma phosphate is transferred to the NDP beta phosphate via a ping-pong mechanism, using a phosphorylated active-site intermediate. The protein is Nucleoside diphosphate kinase of Sodalis glossinidius (strain morsitans).